A 447-amino-acid chain; its full sequence is GTPase Der (447 aa).

2 consecutive EngA-type G domains span residues 3–167 and 181–354; these read PVIA…FAER and TRIA…AAAM. GTP-binding positions include 9 to 16, 56 to 60, 119 to 122, 187 to 194, 234 to 238, and 299 to 302; these read GRPNVGKS, DTGGF, NKAE, DTAGL, and NKWD. The KH-like domain occupies 355 to 439; that stretch reads VKLPTPKLTR…PLRIEFRTNK (85 aa).

The protein belongs to the TRAFAC class TrmE-Era-EngA-EngB-Septin-like GTPase superfamily. EngA (Der) GTPase family. Associates with the 50S ribosomal subunit.

Functionally, GTPase that plays an essential role in the late steps of ribosome biogenesis. This is GTPase Der from Ralstonia nicotianae (strain ATCC BAA-1114 / GMI1000) (Ralstonia solanacearum).